Consider the following 529-residue polypeptide: Peptide chain release factor 3 (529 aa).

In terms of domain architecture, tr-type G spans 11-280 (AKRRTFAIIS…GLVEWAPAPM (270 aa)). Residues 20–27 (SHPDAGKT), 88–92 (DTPGH), and 142–145 (NKLD) each bind GTP.

It belongs to the TRAFAC class translation factor GTPase superfamily. Classic translation factor GTPase family. PrfC subfamily.

The protein localises to the cytoplasm. Its function is as follows. Increases the formation of ribosomal termination complexes and stimulates activities of RF-1 and RF-2. It binds guanine nucleotides and has strong preference for UGA stop codons. It may interact directly with the ribosome. The stimulation of RF-1 and RF-2 is significantly reduced by GTP and GDP, but not by GMP. The chain is Peptide chain release factor 3 from Klebsiella pneumoniae (strain 342).